We begin with the raw amino-acid sequence, 912 residues long: Probable dipeptidyl-aminopeptidase B (912 aa).

The tract at residues 1–74 is disordered; it reads MSSALSPEGD…GPFLGPGASL (74 aa). The Cytoplasmic portion of the chain corresponds to 1 to 85; the sequence is MSSALSPEGD…REPMDRGLRR (85 aa). Low complexity predominate over residues 16–27; the sequence is DSLSSVSTTSLV. The span at 30–50 shows a compositional bias: basic and acidic residues; it reads RIQEKTEMDADNDKEKDPRAL. A compositionally biased stretch (acidic residues) spans 51-63; it reads DDEDPLRDEDDLE. Residues 86 to 106 traverse the membrane as a helical; Signal-anchor for type II membrane protein segment; it reads ILIIVAVVFIGGWLAGLGIFI. The Vacuolar portion of the chain corresponds to 107–912; sequence ASGSYHHESD…KRHMVPQALV (806 aa). Asn344 carries an N-linked (GlcNAc...) asparagine glycan. Catalysis depends on Ser749, which acts as the Charge relay system. Asn808 carries N-linked (GlcNAc...) asparagine glycosylation. Catalysis depends on charge relay system residues Asp826 and His859. The disordered stretch occupies residues 892–912; sequence PQPQKDPVEKEKRHMVPQALV.

This sequence belongs to the peptidase S9B family.

It localises to the vacuole membrane. It carries out the reaction Release of an N-terminal dipeptide, Xaa-Yaa-|-Zaa-, from a polypeptide, preferentially when Yaa is Pro, provided Zaa is neither Pro nor hydroxyproline.. Type IV dipeptidyl-peptidase which removes N-terminal dipeptides sequentially from polypeptides having unsubstituted N-termini provided that the penultimate residue is proline. The polypeptide is Probable dipeptidyl-aminopeptidase B (DAPB) (Fusarium vanettenii (strain ATCC MYA-4622 / CBS 123669 / FGSC 9596 / NRRL 45880 / 77-13-4) (Fusarium solani subsp. pisi)).